A 207-amino-acid chain; its full sequence is Recombination protein RecR (207 aa).

The segment at 62-77 (CSRCNTFTEQDVCETC) adopts a C4-type zinc-finger fold. The 100-residue stretch at 85 to 184 (SVLCVVETPA…KVSRLARGVP (100 aa)) folds into the Toprim domain.

Belongs to the RecR family.

In terms of biological role, may play a role in DNA repair. It seems to be involved in an RecBC-independent recombinational process of DNA repair. It may act with RecF and RecO. This is Recombination protein RecR from Ralstonia nicotianae (strain ATCC BAA-1114 / GMI1000) (Ralstonia solanacearum).